The sequence spans 114 residues: uncharacterized protein (114 aa).

This is an uncharacterized protein from Acanthamoeba polyphaga (Amoeba).